Here is a 469-residue protein sequence, read N- to C-terminus: ATP synthase subunit beta (469 aa).

155 to 162 (GGAGVGKT) lines the ATP pocket.

Belongs to the ATPase alpha/beta chains family. F-type ATPases have 2 components, CF(1) - the catalytic core - and CF(0) - the membrane proton channel. CF(1) has five subunits: alpha(3), beta(3), gamma(1), delta(1), epsilon(1). CF(0) has three main subunits: a(1), b(2) and c(9-12). The alpha and beta chains form an alternating ring which encloses part of the gamma chain. CF(1) is attached to CF(0) by a central stalk formed by the gamma and epsilon chains, while a peripheral stalk is formed by the delta and b chains.

The protein localises to the cell inner membrane. The enzyme catalyses ATP + H2O + 4 H(+)(in) = ADP + phosphate + 5 H(+)(out). Functionally, produces ATP from ADP in the presence of a proton gradient across the membrane. The catalytic sites are hosted primarily by the beta subunits. This Helicobacter pylori (strain ATCC 700392 / 26695) (Campylobacter pylori) protein is ATP synthase subunit beta.